A 383-amino-acid polypeptide reads, in one-letter code: S-adenosylmethionine synthase (383 aa).

His-15 is a binding site for ATP. Asp-17 contributes to the Mg(2+) binding site. Glu-43 contributes to the K(+) binding site. Positions 56 and 99 each coordinate L-methionine. The interval 99–109 (QSPDINQGVDR) is flexible loop. Residues 164–166 (DAK), 230–231 (RF), Asp-239, 245–246 (RK), Ala-262, and Lys-266 contribute to the ATP site. L-methionine is bound at residue Asp-239. Lys-270 is a binding site for L-methionine.

It belongs to the AdoMet synthase family. As to quaternary structure, homotetramer; dimer of dimers. The cofactor is Mg(2+). K(+) serves as cofactor.

The protein localises to the cytoplasm. The catalysed reaction is L-methionine + ATP + H2O = S-adenosyl-L-methionine + phosphate + diphosphate. It functions in the pathway amino-acid biosynthesis; S-adenosyl-L-methionine biosynthesis; S-adenosyl-L-methionine from L-methionine: step 1/1. Its function is as follows. Catalyzes the formation of S-adenosylmethionine (AdoMet) from methionine and ATP. The overall synthetic reaction is composed of two sequential steps, AdoMet formation and the subsequent tripolyphosphate hydrolysis which occurs prior to release of AdoMet from the enzyme. This chain is S-adenosylmethionine synthase, found in Pectobacterium carotovorum subsp. carotovorum (strain PC1).